We begin with the raw amino-acid sequence, 158 residues long: Eukaryotic translation initiation factor 5A-1 (158 aa).

The segment covering M1 to S10 has biased composition (basic and acidic residues). A disordered region spans residues M1 to Q21. A Phosphoserine modification is found at S2. K51 carries the hypusine modification.

The protein belongs to the eIF-5A family. Post-translationally, lys-51 undergoes hypusination, a unique post-translational modification that consists in the addition of a butylamino group from spermidine to lysine side chain, leading to the formation of the unusual amino acid hypusine. eIF-5As are the only known proteins to undergo this modification, which is essential for their function. In terms of tissue distribution, expressed in leaf vasculature and inflorescence stems. Present in xylem tissue but not in phloem, and in developing vessel members, but not in mature vessels members. Detected in anthers.

Functionally, translation factor that promotes translation elongation and termination, particularly upon ribosome stalling at specific amino acid sequence contexts. Binds between the exit (E) and peptidyl (P) site of the ribosome and promotes rescue of stalled ribosome: specifically required for efficient translation of polyproline-containing peptides as well as other motifs that stall the ribosome. Acts as a ribosome quality control (RQC) cofactor by joining the RQC complex to facilitate peptidyl transfer during CAT tailing step. Involved in xylogenesis. The sequence is that of Eukaryotic translation initiation factor 5A-1 (ELF5A-1) from Arabidopsis thaliana (Mouse-ear cress).